We begin with the raw amino-acid sequence, 409 residues long: uncharacterized protein (409 aa).

10 helical membrane passes run 22 to 42 (ILII…VIPA), 58 to 78 (LGII…VVGW), 99 to 119 (GILG…VFFI), 174 to 194 (FGAV…MYIA), 217 to 237 (NTAI…LIFA), 266 to 286 (SYIF…GPLA), 293 to 312 (FVIL…LPFA), 316 to 338 (LAYG…TVVY), 353 to 373 (LTVG…GALI), and 378 to 398 (LTPT…AFLL).

It belongs to the major facilitator superfamily.

The protein localises to the cell membrane. This is an uncharacterized protein from Bacillus subtilis (strain 168).